The following is a 393-amino-acid chain: G protein-activated inward rectifier potassium channel 3 (393 aa).

The segment at 1–23 (MAQENAAFSPGQEEPPRRRGRQR) is disordered. Residues 1 to 57 (MAQENAAFSPGQEEPPRRRGRQRYVEKDGRCNVQQGNVRETYRYLTDLFTTLVDLQW) are Cytoplasmic-facing. Residues 58-82 (RLSLLFFVLAYALTWLFFGAIWWLI) traverse the membrane as a helical segment. The Extracellular portion of the chain corresponds to 83 to 106 (AYGRGDLEHLEDTAWTPCVNNLNG). Positions 107–118 (FVAAFLFSIETE) form an intramembrane region, helical; Pore-forming. An intramembrane region (pore-forming) is located at residues 119–125 (TTIGYGH). A Selectivity filter motif is present at residues 120 to 125 (TIGYGH). Residues 126-134 (RVITDQCPE) are Extracellular-facing. A helical transmembrane segment spans residues 135–156 (GIVLLLLQAILGSMVNAFMVGC). Residues 157-393 (MFVKISQPNK…LPPPESESKV (237 aa)) are Cytoplasmic-facing. Residues 360 to 393 (KVEEEGAGEGAGGEAGADKEQNGCLPPPESESKV) are disordered. Positions 384 to 393 (LPPPESESKV) are enriched in pro residues. Residues 390 to 393 (ESKV) carry the PDZ-binding motif.

This sequence belongs to the inward rectifier-type potassium channel (TC 1.A.2.1) family. KCNJ9 subfamily. Associates with KCNJ3/GIRK1 to form a G-protein-activated heteromultimer pore-forming unit. Interacts (via PDZ-binding motif) with SNX27 (via PDZ domain); the interaction is required when endocytosed to prevent degradation in lysosomes and promote recycling to the plasma membrane.

It is found in the membrane. It carries out the reaction K(+)(in) = K(+)(out). Inward rectifier potassium channels are characterized by a greater tendency to allow potassium to flow into the cell rather than out of it. Their voltage dependence is regulated by the concentration of extracellular potassium; as external potassium is raised, the voltage range of the channel opening shifts to more positive voltages. The inward rectification is mainly due to the blockage of outward current by internal magnesium, This receptor is controlled by G proteins. Unable to produce channel activity when expressed alone. Forms a functional channel in association with KCNJ3/GIRK1. The sequence is that of G protein-activated inward rectifier potassium channel 3 (KCNJ9) from Homo sapiens (Human).